The sequence spans 299 residues: Trimeric intracellular cation channel type A (299 aa).

The Lumenal portion of the chain corresponds to 1 to 18 (MELLSALSLGELALSFSR). A helical membrane pass occupies residues 19–39 (VPLFPVFDLSYFIVSILYLKY). Over 40 to 51 (EPGAVELSRRHP) the chain is Cytoplasmic. Residues 52-72 (IASWLCAMLHCFGSYILADLL) form a helical membrane-spanning segment. Topologically, residues 73–85 (LGEPLIDYFSNNS) are lumenal. G74 provides a ligand contact to Ca(2+). A helical membrane pass occupies residues 86–106 (SILLASAVWYLIFFCPLDLFY). Residues 107-144 (KCVCFLPVKLIFVAMKEVVRVRKIAVGIHHAHHHYHHG) are Cytoplasmic-facing. 2 residues coordinate a 1,2-diacyl-sn-glycero-3-phospho-(1D-myo-inositol-4,5-bisphosphate): K122 and R126. Residues 145–165 (WFVMIATGWVKGSGVALMSNF) traverse the membrane as a helical segment. Residues 166–178 (EQLLRGVWKPETN) lie on the Lumenal side of the membrane. A helical membrane pass occupies residues 179-199 (EILHMSFPTKASLYGAILFTL). The Cytoplasmic portion of the chain corresponds to 200–209 (QQTRWLPVSK). Residues 210 to 230 (ASLIFIFTLFMVSCKVFLTAT) traverse the membrane as a helical segment. Topologically, residues 231–234 (HSHS) are lumenal. The chain crosses the membrane as a helical span at residues 235–255 (SPFDALEGYICPVLFGSACGG). Residues 256–299 (DHHHDNHGGSHSGGGPGAQHSAMPAKSKEELSEGSRKKKAKKAD) lie on the Cytoplasmic side of the membrane. Positions 260 to 299 (DNHGGSHSGGGPGAQHSAMPAKSKEELSEGSRKKKAKKAD) are disordered. Basic and acidic residues predominate over residues 281–290 (KSKEELSEGS).

Belongs to the TMEM38 family. In terms of assembly, homotrimer; conformation seems to be controled by binding to diacylglycerol (DAG).

The protein localises to the sarcoplasmic reticulum membrane. The protein resides in the nucleus membrane. It carries out the reaction K(+)(in) = K(+)(out). Its activity is regulated as follows. Channel activity is activated by a change of voltage within the sarcoplasmic reticulum lumen and blocked by luminal high Ca(2+) levels. Intracellular monovalent cation channel required for maintenance of rapid intracellular calcium release. Acts as a potassium counter-ion channel that functions in synchronization with calcium release from intracellular stores. Opened by a change of voltage within the sarcoplasmic reticulum lumen. This Homo sapiens (Human) protein is Trimeric intracellular cation channel type A.